Reading from the N-terminus, the 433-residue chain is 3-phosphoshikimate 1-carboxyvinyltransferase (433 aa).

The 3-phosphoshikimate site is built by Lys23, Ser24, and Arg28. Lys23 contacts phosphoenolpyruvate. Residues Gly93 and Arg121 each contribute to the phosphoenolpyruvate site. Residues Ser167, Gln169, Asp318, and Lys345 each coordinate 3-phosphoshikimate. Gln169 lines the phosphoenolpyruvate pocket. The Proton acceptor role is filled by Asp318. The phosphoenolpyruvate site is built by Arg349 and Arg390.

The protein belongs to the EPSP synthase family. As to quaternary structure, monomer.

It localises to the cytoplasm. The enzyme catalyses 3-phosphoshikimate + phosphoenolpyruvate = 5-O-(1-carboxyvinyl)-3-phosphoshikimate + phosphate. Its pathway is metabolic intermediate biosynthesis; chorismate biosynthesis; chorismate from D-erythrose 4-phosphate and phosphoenolpyruvate: step 6/7. In terms of biological role, catalyzes the transfer of the enolpyruvyl moiety of phosphoenolpyruvate (PEP) to the 5-hydroxyl of shikimate-3-phosphate (S3P) to produce enolpyruvyl shikimate-3-phosphate and inorganic phosphate. This Nitratiruptor sp. (strain SB155-2) protein is 3-phosphoshikimate 1-carboxyvinyltransferase.